The sequence spans 637 residues: Rab11 family-interacting protein 4 (637 aa).

Residues 49 to 84 form the EF-hand domain; the sequence is GQGEEVEKLVKYLDPNDLGRINFKDFCRGVFAMKGC. Residues D62, N64, R68, and D73 each coordinate Ca(2+). Positions 82–637 are necessary for interaction with RAB11A, subcellular location, homo- or heterooligomerization; the sequence is KGCEELLKDV…HNPSILEIKH (556 aa). Disordered regions lie at residues 138–175 and 219–256; these read EEEA…PAEK and YGEG…SAGQ. The stretch at 280-617 forms a coiled coil; it reads KINLLNDLEA…EEINFRLRQY (338 aa). In terms of domain architecture, FIP-RBD spans 574 to 636; that stretch reads EAKNLFAAQT…DHNPSILEIK (63 aa).

In terms of assembly, homodimer. Forms a complex with Rab11 (RAB11A or RAB11B) and ARF6. Interacts with RAB11A; the interaction is direct. Forms a heterooligomeric complex with RAB11FIP2, RAB11FIP3 and RAB11FIP5. Interacts with ECPAS. As to quaternary structure, (Microbial infection) Interacts with human cytomegalovirus/HHV-5 protein gM/UL100. As to expression, present at high level in testis (at protein level). Weakly expressed in other tissues.

Its subcellular location is the endosome. It is found in the cytoplasm. It localises to the cytoskeleton. The protein localises to the spindle. The protein resides in the microtubule organizing center. Its subcellular location is the centrosome. It is found in the recycling endosome membrane. It localises to the cleavage furrow. The protein localises to the midbody. The protein resides in the cytoplasmic vesicle. Acts as a regulator of endocytic traffic by participating in membrane delivery. Required for the abscission step in cytokinesis, possibly by acting as an 'address tag' delivering recycling endosome membranes to the cleavage furrow during late cytokinesis. In case of infection by HCMV (human cytomegalovirus), may participate in egress of the virus out of nucleus; this function is independent of ARF6. The chain is Rab11 family-interacting protein 4 (RAB11FIP4) from Homo sapiens (Human).